We begin with the raw amino-acid sequence, 108 residues long: UPF0145 protein Patl_2194 (108 aa).

This sequence belongs to the UPF0145 family.

In Pseudoalteromonas atlantica (strain T6c / ATCC BAA-1087), this protein is UPF0145 protein Patl_2194.